Consider the following 194-residue polypeptide: Recombination protein RecR (194 aa).

The segment at 55–70 adopts a C4-type zinc-finger fold; that stretch reads CRECGNLAEGELCPIC. Residues 78–171 form the Toprim domain; sequence SLLAVVESVA…RVTRPAYGLP (94 aa).

Belongs to the RecR family.

In terms of biological role, may play a role in DNA repair. It seems to be involved in an RecBC-independent recombinational process of DNA repair. It may act with RecF and RecO. The polypeptide is Recombination protein RecR (Thermus thermophilus (strain ATCC 27634 / DSM 579 / HB8)).